We begin with the raw amino-acid sequence, 272 residues long: Formamidopyrimidine-DNA glycosylase (272 aa).

Pro-2 (schiff-base intermediate with DNA) is an active-site residue. The active-site Proton donor is the Glu-3. Lys-58 functions as the Proton donor; for beta-elimination activity in the catalytic mechanism. 3 residues coordinate DNA: His-91, Arg-111, and Arg-153. The FPG-type zinc finger occupies 238–272; it reads AVYGRANKACVICSKPLKEIRQAQRSTVFCINCQS. Arg-262 serves as the catalytic Proton donor; for delta-elimination activity.

The protein belongs to the FPG family. Monomer. Requires Zn(2+) as cofactor.

It catalyses the reaction Hydrolysis of DNA containing ring-opened 7-methylguanine residues, releasing 2,6-diamino-4-hydroxy-5-(N-methyl)formamidopyrimidine.. The enzyme catalyses 2'-deoxyribonucleotide-(2'-deoxyribose 5'-phosphate)-2'-deoxyribonucleotide-DNA = a 3'-end 2'-deoxyribonucleotide-(2,3-dehydro-2,3-deoxyribose 5'-phosphate)-DNA + a 5'-end 5'-phospho-2'-deoxyribonucleoside-DNA + H(+). Functionally, involved in base excision repair of DNA damaged by oxidation or by mutagenic agents. Acts as a DNA glycosylase that recognizes and removes damaged bases. Has a preference for oxidized purines, such as 7,8-dihydro-8-oxoguanine (8-oxoG). Has AP (apurinic/apyrimidinic) lyase activity and introduces nicks in the DNA strand. Cleaves the DNA backbone by beta-delta elimination to generate a single-strand break at the site of the removed base with both 3'- and 5'-phosphates. In Marinomonas sp. (strain MWYL1), this protein is Formamidopyrimidine-DNA glycosylase.